The chain runs to 250 residues: Probable aquaporin TIP-type RB7-18C (250 aa).

A run of 2 helical transmembrane segments spans residues 20–42 (AYVAEFIATLLFVFAGVGSAIAY) and 55–77 (GLVAVAVAHAFALFVGVSIAANI). The short motif at 83 to 85 (NPA) is the NPA 1 element. Transmembrane regions (helical) follow at residues 97 to 119 (TILTGFFYWIAQLLGSTVACLLL), 140 to 162 (FQGVVMEIIITFALVYTVYATAA), and 172 to 194 (IAPIAIGFIVGANILAAGPFSGG). The NPA 2 signature appears at 197–199 (NPA). Residues 215 to 237 (WIYWAGPLIGGGLAGFIYGDVFI) form a helical membrane-spanning segment.

Belongs to the MIP/aquaporin (TC 1.A.8) family. TIP (TC 1.A.8.10) subfamily. As to expression, roots.

It localises to the vacuole membrane. Channel protein in tonoplast. These proteins may allow the diffusion of amino acids and/or peptides from the vacuolar compartment to the cytoplasm. The protein is Probable aquaporin TIP-type RB7-18C of Nicotiana tabacum (Common tobacco).